Reading from the N-terminus, the 175-residue chain is Small ribosomal subunit protein uS9 (175 aa).

This sequence belongs to the universal ribosomal protein uS9 family.

The chain is Small ribosomal subunit protein uS9 from Streptomyces griseus subsp. griseus (strain JCM 4626 / CBS 651.72 / NBRC 13350 / KCC S-0626 / ISP 5235).